The chain runs to 66 residues: Large ribosomal subunit protein uL29 (66 aa).

Belongs to the universal ribosomal protein uL29 family.

The chain is Large ribosomal subunit protein uL29 from Rhizobium etli (strain CIAT 652).